Reading from the N-terminus, the 465-residue chain is Triplex capsid protein 1 (465 aa).

It belongs to the herpesviridae TRX1 protein family. As to quaternary structure, interacts with TRX2, MCP and capsid vertex component 2/CVC2.

Its subcellular location is the virion. It is found in the host nucleus. Its function is as follows. Structural component of the T=16 icosahedral capsid. The capsid is composed of pentamers and hexamers of major capsid protein/MCP, which are linked together by heterotrimers called triplexes. These triplexes are formed by a single molecule of triplex protein 1/TRX1 and two copies of triplex protein 2/TRX2. Additionally, TRX1 is required for efficient transport of TRX2 to the nucleus, which is the site of capsid assembly. The chain is Triplex capsid protein 1 from Equus caballus (Horse).